The following is a 550-amino-acid chain: Hydroxylamine reductase (550 aa).

[2Fe-2S] cluster is bound by residues C3, C6, C18, and C25. Hybrid [4Fe-2O-2S] cluster-binding residues include H249, E273, C317, C405, C433, C458, E492, and K494. A Cysteine persulfide modification is found at C405.

Belongs to the HCP family. Requires [2Fe-2S] cluster as cofactor. Hybrid [4Fe-2O-2S] cluster serves as cofactor.

The protein localises to the cytoplasm. It catalyses the reaction A + NH4(+) + H2O = hydroxylamine + AH2 + H(+). Its function is as follows. Catalyzes the reduction of hydroxylamine to form NH(3) and H(2)O. The sequence is that of Hydroxylamine reductase from Escherichia coli O7:K1 (strain IAI39 / ExPEC).